A 358-amino-acid chain; its full sequence is Beta-lactamase (358 aa).

Serine 60 serves as the catalytic Acyl-ester intermediate. The Proton acceptor role is filled by tyrosine 146. Position 311-313 (311-313) interacts with substrate; that stretch reads KTG.

It belongs to the class-C beta-lactamase family.

Its subcellular location is the periplasm. The enzyme catalyses a beta-lactam + H2O = a substituted beta-amino acid. In terms of biological role, this protein is a serine beta-lactamase with a substrate specificity for cephalosporins. In Pseudomonas fluorescens, this protein is Beta-lactamase.